A 693-amino-acid chain; its full sequence is Elongation factor G (693 aa).

One can recognise a tr-type G domain in the interval 8–282 (EKTRNIGIMA…AVIDYLPSPL (275 aa)). Residues 17–24 (AHIDAGKT), 81–85 (DTPGH), and 135–138 (NKMD) contribute to the GTP site.

The protein belongs to the TRAFAC class translation factor GTPase superfamily. Classic translation factor GTPase family. EF-G/EF-2 subfamily.

It localises to the cytoplasm. In terms of biological role, catalyzes the GTP-dependent ribosomal translocation step during translation elongation. During this step, the ribosome changes from the pre-translocational (PRE) to the post-translocational (POST) state as the newly formed A-site-bound peptidyl-tRNA and P-site-bound deacylated tRNA move to the P and E sites, respectively. Catalyzes the coordinated movement of the two tRNA molecules, the mRNA and conformational changes in the ribosome. The sequence is that of Elongation factor G from Staphylococcus aureus (strain Newman).